The following is an 808-amino-acid chain: Leucine-rich repeat-containing protein 41 (808 aa).

The interval 45–54 is interaction with Elongin BC complex; it reads ALFELCGRAV. Phosphoserine is present on residues Ser-155, Ser-276, and Ser-326. 2 disordered regions span residues 269–289 and 304–404; these read ASRG…SRRP and TRRK…GSGA. Thr-327 is modified (phosphothreonine). Over residues 357–379 the composition is skewed to low complexity; that stretch reads PSSAPTAASSSTSSKRAPASSVS. A Phosphoserine modification is found at Ser-369. Over residues 383–397 the composition is skewed to basic residues; the sequence is PLKRFKRATGKKGPR. 7 LRR repeats span residues 483 to 503, 514 to 526, 527 to 551, 609 to 631, 632 to 655, 697 to 724, and 727 to 748; these read WVSL…IFRL, AGCR…LSDL, FSPL…VLSI, SGSL…FGLV, LQTL…LADC, NSTL…VFSE, and SSSL…LLEF.

Part of an E3 ubiquitin-protein ligase complex with Elongin BC (ELOB and ELOC), RBX1 and CUL5. Component of a probable ECS(LRRC41) complex which contains CUL5, RNF7/RBX2, Elongin BC and LRRC41. Interacts with CUL5, RNF7, ELOB and ELOC.

It participates in protein modification; protein ubiquitination. Probable substrate recognition component of an ECS (Elongin BC-CUL2/5-SOCS-box protein) E3 ubiquitin ligase complex which mediates the ubiquitination and subsequent proteasomal degradation of target proteins. The polypeptide is Leucine-rich repeat-containing protein 41 (Lrrc41) (Rattus norvegicus (Rat)).